Reading from the N-terminus, the 212-residue chain is Probable GTP-binding protein EngB (212 aa).

The EngB-type G domain maps to 38–210 (SLPEIAFVGK…KASLAKCIKP (173 aa)). GTP-binding positions include 46-53 (GKSNVGKS), 73-77 (GRTRQ), 91-94 (DLPG), 158-161 (TKSD), and 189-191 (VSN). S53 and T75 together coordinate Mg(2+).

This sequence belongs to the TRAFAC class TrmE-Era-EngA-EngB-Septin-like GTPase superfamily. EngB GTPase family. Mg(2+) is required as a cofactor.

In terms of biological role, necessary for normal cell division and for the maintenance of normal septation. In Rickettsia peacockii (strain Rustic), this protein is Probable GTP-binding protein EngB.